Consider the following 99-residue polypeptide: UPF0235 protein AHA_3661 (99 aa).

It belongs to the UPF0235 family.

In Aeromonas hydrophila subsp. hydrophila (strain ATCC 7966 / DSM 30187 / BCRC 13018 / CCUG 14551 / JCM 1027 / KCTC 2358 / NCIMB 9240 / NCTC 8049), this protein is UPF0235 protein AHA_3661.